Here is an 861-residue protein sequence, read N- to C-terminus: Leucine--tRNA ligase (861 aa).

The 'HIGH' region signature appears at 42–52 (PYPSGRLHMGH). Positions 619–623 (KMSKS) match the 'KMSKS' region motif. Lys-622 serves as a coordination point for ATP.

The protein belongs to the class-I aminoacyl-tRNA synthetase family.

Its subcellular location is the cytoplasm. The catalysed reaction is tRNA(Leu) + L-leucine + ATP = L-leucyl-tRNA(Leu) + AMP + diphosphate. The chain is Leucine--tRNA ligase from Haemophilus ducreyi (strain 35000HP / ATCC 700724).